The primary structure comprises 89 residues: Small ribosomal subunit protein uS15 (89 aa).

The protein belongs to the universal ribosomal protein uS15 family. In terms of assembly, part of the 30S ribosomal subunit. Forms a bridge to the 50S subunit in the 70S ribosome, contacting the 23S rRNA.

One of the primary rRNA binding proteins, it binds directly to 16S rRNA where it helps nucleate assembly of the platform of the 30S subunit by binding and bridging several RNA helices of the 16S rRNA. Its function is as follows. Forms an intersubunit bridge (bridge B4) with the 23S rRNA of the 50S subunit in the ribosome. This is Small ribosomal subunit protein uS15 from Oenococcus oeni (strain ATCC BAA-331 / PSU-1).